The following is a 427-amino-acid chain: Tumor necrosis factor receptor superfamily member 16 (427 aa).

Positions 1 to 31 are cleaved as a signal peptide; it reads MRRAGAACSAMDRLRLLLLLLLLLGVSFGGA. The Extracellular portion of the chain corresponds to 32–254; the sequence is KETCSTGMYT…VVTRGTADNL (223 aa). TNFR-Cys repeat units lie at residues 34–67, 69–110, 111–149, and 151–191; these read TCSTGMYTHSGECCKACNLGEGVAQPCGANQTVC, PCLD…DAVC, RCSYGYYQDEETGRCEACSVCGVGSGLVFSCQDKQNTVC, and ECPE…DAEC. 12 cysteine pairs are disulfide-bonded: Cys-35-Cys-46, Cys-47-Cys-60, Cys-50-Cys-67, Cys-70-Cys-86, Cys-89-Cys-102, Cys-92-Cys-110, Cys-112-Cys-125, Cys-128-Cys-141, Cys-131-Cys-149, Cys-152-Cys-167, Cys-170-Cys-183, and Cys-173-Cys-191. N-linked (GlcNAc...) asparagine glycosylation is present at Asn-63. Residues 197–223 are disordered; it reads RWITRSTPPEGSDVTTPSTQEPEAPPE. Residues 200-217 are compositionally biased toward polar residues; that stretch reads TRSTPPEGSDVTTPSTQE. A helical transmembrane segment spans residues 255–275; it reads IPVYCSILAAVVVGLVAYIAF. Residues 276–427 lie on the Cytoplasmic side of the membrane; sequence KRWNSCKQNK…CSESTATSPV (152 aa). Composition is skewed to polar residues over residues 284 to 294 and 308 to 329; these read NKQGANSRPVN and SGISVDSQSLHDQQTHTQTASG. Residues 284 to 334 are disordered; sequence NKQGANSRPVNQTPPPEGEKLHSDSGISVDSQSLHDQQTHTQTASGQALKG. Ser-314 bears the Phosphoserine mark. The tract at residues 329 to 344 is mediates interaction with KIDINS220; the sequence is GQALKGDGNLYSSLPL. The Death domain occupies 356 to 421; that stretch reads GDTWRHLAGE…DIVESLCSES (66 aa).

Homodimer; disulfide-linked. Heterodimer with SORCS2. The extracellular domains of the heterodimer bind NGF. The cytoplasmic region of the heterodimer binds TRIO. NGF binding mediates dissociation of TRIO from the receptor complex. Interacts with TRAF2, TRAF4, TRAF6, PTPN13 and RANBP9. Interacts through TRAF6 with SQSTM1 which bridges NGFR to NTRK1. Interacts with BEX1. Interacts with BEX3. Interacts with KIDINS220 and NTRK1. Can form a ternary complex with NTRK1 and KIDINS220 and this complex is affected by the expression levels of KIDINS220. An increase in KIDINS220 expression leads to a decreased association of NGFR and NTRK1. Interacts (via death domain) with RAB31. Interacts with NTRK2; may regulate the ligand specificity of the NTRK2 receptor. Interacts with LINGO1. Interacts with NRADD. Interacts with MAGED1; the interaction antagonizes the association NGFR:NTRK1. Interacts with RTN4R. Interacts (via death domain) with ARHGDIA and RIPK2. Interacts with BFAR. In terms of assembly, (Microbial infection) Binds to rabies virus glycoprotein Gs. N-glycosylated. O-glycosylated. Post-translationally, phosphorylated on serine residues. In terms of tissue distribution, detected in Schwann cells. Detected in embryonic brain, in hippocampus neurons (at protein level). Detected in brain and spinal cord.

It localises to the cell membrane. The protein resides in the cytoplasm. Its subcellular location is the perikaryon. It is found in the cell projection. The protein localises to the growth cone. It localises to the dendritic spine. Functionally, low affinity neurotrophin receptor which can bind to mature NGF, BDNF, NTF3, and NTF4. Forms a heterodimeric receptor with SORCS2 that binds the precursor forms of NGF (proNGF), BDNF (proBDNF) and NTF3 (proNT3) with high affinity, and has much lower affinity for mature NGF and BDNF. Plays an important role in differentiation and survival of specific neuronal populations during development. Can mediate cell survival as well as cell death of neural cells. The heterodimeric receptor formed with SORCS2 plays a role in proBDNF-dependent synaptic plasticity, in hippocampal long term depression (LTD) and long term potentiation (LTP). Plays a role in the inactivation of RHOA. Plays a role in the regulation of the translocation of GLUT4 to the cell surface in adipocytes and skeletal muscle cells in response to insulin, probably by regulating RAB31 activity, and thereby contributes to the regulation of insulin-dependent glucose uptake. Necessary for the circadian oscillation of the clock genes BMAL1, PER1, PER2 and NR1D1 in the suprachiasmatic nucleus (SCN) of the brain and in liver and of the genes involved in glucose and lipid metabolism in the liver. (Microbial infection) Cell surface receptor for rabies virus glycoprotein Gs. In terms of biological role, does not bind NGF, BDNF, NTF3, and NTF4. This is Tumor necrosis factor receptor superfamily member 16 (Ngfr) from Mus musculus (Mouse).